The sequence spans 384 residues: S-adenosylmethionine synthase (384 aa).

Residue His-15 participates in ATP binding. Residue Asp-17 coordinates Mg(2+). K(+) is bound at residue Glu-43. Residues Glu-56 and Gln-99 each coordinate L-methionine. The segment at 99-109 (QSPDINQGVDR) is flexible loop. ATP contacts are provided by residues 164 to 166 (DAK), 230 to 231 (RF), Asp-239, 245 to 246 (RK), Ala-262, and Lys-266. Asp-239 contacts L-methionine. Lys-270 contacts L-methionine.

The protein belongs to the AdoMet synthase family. Homotetramer; dimer of dimers. Mg(2+) serves as cofactor. It depends on K(+) as a cofactor.

It is found in the cytoplasm. The catalysed reaction is L-methionine + ATP + H2O = S-adenosyl-L-methionine + phosphate + diphosphate. The protein operates within amino-acid biosynthesis; S-adenosyl-L-methionine biosynthesis; S-adenosyl-L-methionine from L-methionine: step 1/1. In terms of biological role, catalyzes the formation of S-adenosylmethionine (AdoMet) from methionine and ATP. The overall synthetic reaction is composed of two sequential steps, AdoMet formation and the subsequent tripolyphosphate hydrolysis which occurs prior to release of AdoMet from the enzyme. The polypeptide is S-adenosylmethionine synthase (Salmonella heidelberg (strain SL476)).